Consider the following 366-residue polypeptide: A-type ATP synthase subunit C (366 aa).

The protein belongs to the V-ATPase V0D/AC39 subunit family. Has multiple subunits with at least A(3), B(3), C, D, E, F, H, I and proteolipid K(x).

Its subcellular location is the cell membrane. Component of the A-type ATP synthase that produces ATP from ADP in the presence of a proton gradient across the membrane. The chain is A-type ATP synthase subunit C from Thermococcus gammatolerans (strain DSM 15229 / JCM 11827 / EJ3).